Here is a 556-residue protein sequence, read N- to C-terminus: 2-isopropylmalate synthase (556 aa).

Residues 33–307 (PIWLSSDLRD…DPQLDFSDID (275 aa)) form the Pyruvate carboxyltransferase domain. D42, H246, H248, and N282 together coordinate Mg(2+). A regulatory domain region spans residues 439–556 (ATAPYTLKGH…ALHQAQEAAA (118 aa)).

Belongs to the alpha-IPM synthase/homocitrate synthase family. LeuA type 2 subfamily. As to quaternary structure, homodimer. Mg(2+) is required as a cofactor.

Its subcellular location is the cytoplasm. It carries out the reaction 3-methyl-2-oxobutanoate + acetyl-CoA + H2O = (2S)-2-isopropylmalate + CoA + H(+). The protein operates within amino-acid biosynthesis; L-leucine biosynthesis; L-leucine from 3-methyl-2-oxobutanoate: step 1/4. Functionally, catalyzes the condensation of the acetyl group of acetyl-CoA with 3-methyl-2-oxobutanoate (2-ketoisovalerate) to form 3-carboxy-3-hydroxy-4-methylpentanoate (2-isopropylmalate). In Stutzerimonas stutzeri (strain A1501) (Pseudomonas stutzeri), this protein is 2-isopropylmalate synthase.